A 680-amino-acid chain; its full sequence is tRNA 5-methylaminomethyl-2-thiouridine biosynthesis bifunctional protein MnmC (680 aa).

Residues Met-1–Thr-251 are tRNA (mnm(5)s(2)U34)-methyltransferase. The tract at residues Ile-277–Ile-680 is FAD-dependent cmnm(5)s(2)U34 oxidoreductase.

It in the N-terminal section; belongs to the methyltransferase superfamily. tRNA (mnm(5)s(2)U34)-methyltransferase family. The protein in the C-terminal section; belongs to the DAO family. Requires FAD as cofactor.

Its subcellular location is the cytoplasm. It catalyses the reaction 5-aminomethyl-2-thiouridine(34) in tRNA + S-adenosyl-L-methionine = 5-methylaminomethyl-2-thiouridine(34) in tRNA + S-adenosyl-L-homocysteine + H(+). Functionally, catalyzes the last two steps in the biosynthesis of 5-methylaminomethyl-2-thiouridine (mnm(5)s(2)U) at the wobble position (U34) in tRNA. Catalyzes the FAD-dependent demodification of cmnm(5)s(2)U34 to nm(5)s(2)U34, followed by the transfer of a methyl group from S-adenosyl-L-methionine to nm(5)s(2)U34, to form mnm(5)s(2)U34. This Aliivibrio fischeri (strain ATCC 700601 / ES114) (Vibrio fischeri) protein is tRNA 5-methylaminomethyl-2-thiouridine biosynthesis bifunctional protein MnmC.